The sequence spans 747 residues: Plakophilin-1 (747 aa).

The required for binding to single stranded DNA stretch occupies residues 1–234 (MNHSPLKTAL…SFGHSRASSK (234 aa)). The required for interaction with EIF4A1 stretch occupies residues 1–286 (MNHSPLKTAL…ESAKQQVYQL (286 aa)). At S4 the chain carries Phosphoserine. Positions 48–68 (TVKRQKSKSSQSSTLSHSNRG) are disordered. 2 phosphorylation in this region is required for cytoplasmic localization and protein stabilization regions span residues 54-69 (SKSSQSSTLSHSNRGS) and 116-191 (RFSS…STCS). S118 bears the Phosphoserine; by PKB/AKT2 mark. A phosphoserine mark is found at S119, S121, and S142. The tract at residues 160-269 (YCDPRGTLRK…KYQAIGAYYI (110 aa)) is required for WNT-mediated nuclear localization. 9 ARM repeats span residues 243–274 (SGLTIPKAVQYLSSQDEKYQAIGAYYIQHTCF), 275–316 (QDES…NLVF), 317–359 (RSTT…NLSS), 360–415 (TDEL…KRLG), 416–463 (MREL…NCVA), 525–556 (NYDCPLPEEETNPKGSGWLYHSDAIRTYLNLM), 557–603 (GKSK…IARL), 604–649 (LQSG…SHTG), and 650–713 (NTSN…DMWS).

It belongs to the beta-catenin family. Part of a complex that contains DSG3, PKP1, YAP1 and YWHAG; the complex is required for localization of DSG3 and YAP1 to the cell membrane in keratinocytes. Interacts with DSP. Interacts (via N-terminus) with KRT5/CK5, KRT8/CK8 (via rod domain), KRT15/CK15 and KRT18/CK18 (via rod domain) as part of intermediate filaments. Interacts with VIM (via rod domain). Interacts with DSP. Interacts with DES. Interacts with FXR1; the interaction may facilitate the binding of PKP1 to PKP2, PKP3 and DSP mRNA. Interacts (via N-terminus) with EIF4A1; the interaction promotes EIF4A1 recruitment to the cap-dependent translation complex and EIF4A1 ATPase activity. Interacts with TJP1/ZO-1; the interaction facilitates TJP1/ZO-1 localization to the plasma membrane. Interacts (when phosphorylated) with YWHAG; the interaction results in translocation of PKP1 to the cytoplasm and loss of intercellular adhesion in keratinocytes. Post-translationally, phosphorylated by AKT2; required for interaction with YWHAG and subsequent localization away from desmosomes to the cytoplasm. Phosphorylation of Ser-118 by AKT2 promotes PKP1-driven cap-dependent mRNA translation and decreases intercellular adhesion, phosphorylation is promoted by insulin. Phosphorylation by RIPK4 at the N-terminus is required for its role in differentiation of keratinocytes and DSG1 localization at cell junctions. As to expression, expressed in stratified squamous, complex, glandular duct and bladder epithelia (at protein level). In terms of tissue distribution, widely expressed (at protein level).

It localises to the cell junction. The protein localises to the desmosome. Its subcellular location is the nucleus. The protein resides in the cytoplasm. It is found in the perinuclear region. It localises to the cell membrane. The protein localises to the stress granule. A component of desmosome cell-cell junctions which are required for positive regulation of cellular adhesion. Plays a role in desmosome protein expression regulation and localization to the desmosomal plaque, thereby maintaining cell sheet integrity and anchorage of desmosomes to intermediate filaments. Required for localization of DSG3 and YAP1 to the cell membrane in keratinocytes in response to mechanical strain, via the formation of an interaction complex composed of DSG3, YAP1, PKP1 and YWHAG. Positively regulates differentiation of keratinocytes, potentially via promoting localization of DSG1 at desmosome cell junctions. Required for calcium-independent development and maturation of desmosome plaques specifically at lateral cell-cell contacts in differentiating keratinocytes. Plays a role in the maintenance of DSG3 protein abundance, DSG3 clustering and localization of these clusters to the cell membrane in keratinocytes. May also promote keratinocyte proliferation and morphogenesis during postnatal development. Required for tight junction inside-out transepidermal barrier function of the skin. Promotes Wnt-mediated proliferation and differentiation of ameloblasts, via facilitating TJP1/ZO-1 localization to tight junctions. Binds single-stranded DNA (ssDNA), and may thereby play a role in sensing DNA damage and promoting cell survival. Positively regulates cap-dependent translation and as a result cell proliferation, via recruitment of EIF4A1 to the initiation complex and promotion of EIF4A1 ATPase activity. Regulates the mRNA stability and protein abundance of desmosome components PKP2, PKP3, DSC2 and DSP, potentially via its interaction with FXR1. This is Plakophilin-1 (PKP1) from Homo sapiens (Human).